The primary structure comprises 369 residues: 3-dehydroquinate synthase (369 aa).

NAD(+) contacts are provided by residues 78-83, 112-116, 136-137, lysine 149, lysine 158, and 176-179; these read DGERYK, GVIGD, TT, and TLTT. Residues glutamate 191, histidine 254, and histidine 271 each contribute to the Zn(2+) site.

The protein belongs to the sugar phosphate cyclases superfamily. Dehydroquinate synthase family. Requires NAD(+) as cofactor. Co(2+) is required as a cofactor. The cofactor is Zn(2+).

The protein resides in the cytoplasm. It catalyses the reaction 7-phospho-2-dehydro-3-deoxy-D-arabino-heptonate = 3-dehydroquinate + phosphate. The protein operates within metabolic intermediate biosynthesis; chorismate biosynthesis; chorismate from D-erythrose 4-phosphate and phosphoenolpyruvate: step 2/7. Functionally, catalyzes the conversion of 3-deoxy-D-arabino-heptulosonate 7-phosphate (DAHP) to dehydroquinate (DHQ). The polypeptide is 3-dehydroquinate synthase (Nitrosomonas europaea (strain ATCC 19718 / CIP 103999 / KCTC 2705 / NBRC 14298)).